The primary structure comprises 323 residues: Fructose-1,6-bisphosphatase class 1 (323 aa).

Residues glutamate 84, aspartate 103, leucine 105, and aspartate 106 each coordinate Mg(2+). Substrate-binding positions include 106 to 109, asparagine 198, and lysine 264; that span reads DGSS. Glutamate 270 provides a ligand contact to Mg(2+).

This sequence belongs to the FBPase class 1 family. As to quaternary structure, homotetramer. It depends on Mg(2+) as a cofactor.

It localises to the cytoplasm. The catalysed reaction is beta-D-fructose 1,6-bisphosphate + H2O = beta-D-fructose 6-phosphate + phosphate. It functions in the pathway carbohydrate biosynthesis; gluconeogenesis. The protein is Fructose-1,6-bisphosphatase class 1 of Pseudoalteromonas atlantica (strain T6c / ATCC BAA-1087).